Here is a 509-residue protein sequence, read N- to C-terminus: Anaerobic nitric oxide reductase transcription regulator NorR (509 aa).

D56 is subject to 4-aspartylphosphate. Residues M186–V415 form the Sigma-54 factor interaction domain. ATP contacts are provided by residues G214–E221 and A277–E286. Residues W484 to R503 constitute a DNA-binding region (H-T-H motif).

It participates in nitrogen metabolism; nitric oxide reduction. Its function is as follows. Required for the expression of anaerobic nitric oxide (NO) reductase, acts as a transcriptional activator for at least the norVW operon. Activation also requires sigma-54. The protein is Anaerobic nitric oxide reductase transcription regulator NorR of Aeromonas salmonicida (strain A449).